Consider the following 177-residue polypeptide: MAEYLATCSFHSSFVKHFFPYVKSFPPFLPWPLQDPLFVVSLLRVDIVISICYHTQIYLHPADICLYCPFACNLMTKLHMLASRKMMYHQNVSCNEPGHRAGRVRKARSTLIVINSNTMERLPFTRNGSGQQSNKLRDPKKGRTHKPKPSEKHKKNKTGKKGAQEKTHRSRSSRKGN.

Positions 122–177 (LPFTRNGSGQQSNKLRDPKKGRTHKPKPSEKHKKNKTGKKGAQEKTHRSRSSRKGN) are disordered. Composition is skewed to basic residues over residues 142 to 160 (GRTHKPKPSEKHKKNKTGK) and 168 to 177 (HRSRSSRKGN).

This is an uncharacterized protein from Saccharomyces cerevisiae (strain ATCC 204508 / S288c) (Baker's yeast).